A 297-amino-acid chain; its full sequence is Protease HtpX homolog (297 aa).

A helical membrane pass occupies residues 16-36 (IFMAIGFLVGGMAGMILAFVV). Position 134 (His-134) interacts with Zn(2+). Glu-135 is a catalytic residue. His-138 lines the Zn(2+) pocket. Transmembrane regions (helical) follow at residues 147 to 167 (MTVT…ALFF) and 175 to 195 (IGSI…QMAI). Residue Glu-200 participates in Zn(2+) binding.

The protein belongs to the peptidase M48B family. It depends on Zn(2+) as a cofactor.

The protein localises to the cell inner membrane. This is Protease HtpX homolog from Hyphomonas neptunium (strain ATCC 15444).